The following is a 370-amino-acid chain: Cobalt-precorrin-5B C(1)-methyltransferase (370 aa).

This sequence belongs to the CbiD family.

It carries out the reaction Co-precorrin-5B + S-adenosyl-L-methionine = Co-precorrin-6A + S-adenosyl-L-homocysteine. It participates in cofactor biosynthesis; adenosylcobalamin biosynthesis; cob(II)yrinate a,c-diamide from sirohydrochlorin (anaerobic route): step 6/10. In terms of biological role, catalyzes the methylation of C-1 in cobalt-precorrin-5B to form cobalt-precorrin-6A. This Prochlorococcus marinus (strain MIT 9312) protein is Cobalt-precorrin-5B C(1)-methyltransferase.